Reading from the N-terminus, the 986-residue chain is E3 ubiquitin-protein ligase Arkadia (986 aa).

Residues lysine 19, lysine 28, lysine 34, lysine 47, lysine 59, lysine 73, lysine 87, lysine 96, and lysine 110 each participate in a glycyl lysine isopeptide (Lys-Gly) (interchain with G-Cter in SUMO2) cross-link. Over residues 66-89 (HLCDDSQKQEKDMNGNQQEQEKSL) the composition is skewed to basic and acidic residues. The segment at 66–106 (HLCDDSQKQEKDMNGNQQEQEKSLVVRKKRKSQQAGPSYVQ) is disordered. The tract at residues 120–191 (QHLGTPSDED…HKWPRTETES (72 aa)) is disordered. A compositionally biased stretch (low complexity) spans 132–151 (SSFSDCLSSPSSSLHFGDSD). The span at 164 to 173 (RHSQTILNAK) shows a compositional bias: polar residues. Residue lysine 173 forms a Glycyl lysine isopeptide (Lys-Gly) (interchain with G-Cter in SUMO2) linkage. Residues 174–184 (SRSHSARSHKW) show a composition bias toward basic residues. Glycyl lysine isopeptide (Lys-Gly) (interchain with G-Cter in SUMO2) cross-links involve residues lysine 198 and lysine 218. An interaction with AXIN1 region spans residues 241–404 (VLARRKYALL…VPTTSARMES (164 aa)). The disordered stretch occupies residues 248 to 277 (ALLPSSSSSSENDLSSESSSSSSTEGEEDL). A compositionally biased stretch (low complexity) spans 252 to 271 (SSSSSSENDLSSESSSSSST). The SUMO interaction motif 1 (SIM) motif lies at 300 to 304 (VVVIE). The short motif at 325–331 (EVEIVTV) is the SUMO interaction motif 2 (SIM) element. Positions 337–373 (SRSTLGHSRSHWSQGSSSHASRPQEPRNRSRISTVIQ) are disordered. The segment covering 347–357 (HWSQGSSSHAS) has biased composition (low complexity). The SUMO interaction motif 3 (SIM) signature appears at 382–386 (VVDLT). Disordered stretches follow at residues 389-471 (EDEP…ETGP), 506-561 (QQHG…SYHE), 610-646 (APSQ…RHYM), 659-684 (HQAS…VDYV), and 696-719 (ISSH…TAAP). A compositionally biased stretch (polar residues) spans 395–466 (VPTTSARMES…DSRRTTSSAV (72 aa)). The span at 508–522 (HGHHFQHHHHHHHTP) shows a compositional bias: basic residues. Polar residues predominate over residues 551 to 561 (ANSSSGTSYHE). The segment covering 670 to 680 (NPPPQTQPPPQ) has biased composition (pro residues). The interval 907 to 909 (YPH) is ubiquitin binding. Glycyl lysine isopeptide (Lys-Gly) (interchain with G-Cter in SUMO2) cross-links involve residues lysine 915 and lysine 919. 2 residues coordinate Zn(2+): cysteine 934 and cysteine 937. An RING-type; atypical zinc finger spans residues 934 to 975 (CTICLSILEEGEDVRRLPCMHLFHQVCVDQWLITNKKCPICR). The tract at residues 949–953 (RLPCM) is ubiquitin binding. Zn(2+) is bound by residues histidine 957 and cysteine 960.

This sequence belongs to the Arkadia family. In terms of assembly, monomer. Interacts with SMAD6, SMAD7, AXIN1, AXIN2 and SKIL isoform SNON. Interacts with (phosphorylated) SMAD2 and SMAD3. Part of a complex containing RNF111, AXIN1 and SMAD7. Interacts (via SIM domains) with SUMO1 and SUMO2.

It localises to the nucleus. The protein localises to the cytoplasm. It is found in the PML body. It carries out the reaction S-ubiquitinyl-[E2 ubiquitin-conjugating enzyme]-L-cysteine + [acceptor protein]-L-lysine = [E2 ubiquitin-conjugating enzyme]-L-cysteine + N(6)-ubiquitinyl-[acceptor protein]-L-lysine.. It functions in the pathway protein modification; protein ubiquitination. Its activity is regulated as follows. Binds free ubiquitin non-covalently via its RING-type zinc finger. Ubiquitin-binding leads to enhance the E3 ubiquitin-protein ligase activity by stabilizing the ubiquitin-conjugating enzyme E2 (donor ubiquitin) in the 'closed' conformation and activating ubiquitin transfer. Functionally, E3 ubiquitin-protein ligase. Required for mesoderm patterning during embryonic development. Acts as an enhancer of the transcriptional responses of the SMAD2/SMAD3 effectors, which are activated downstream of BMP. Acts by mediating ubiquitination and degradation of SMAD inhibitors such as SMAD7, inducing their proteasomal degradation and thereby enhancing the transcriptional activity of TGF-beta and BMP. In addition to enhance transcription of SMAD2/SMAD3 effectors, also regulates their turnover by mediating their ubiquitination and subsequent degradation, coupling their activation with degradation, thereby ensuring that only effectors 'in use' are degraded. Activates SMAD3/SMAD4-dependent transcription by triggering signal-induced degradation of SNON isoform of SKIL. Associates with UBE2D2 as an E2 enzyme. Specifically binds polysumoylated chains via SUMO interaction motifs (SIMs) and mediates ubiquitination of sumoylated substrates. Catalyzes 'Lys-63'-linked ubiquitination of sumoylated XPC in response to UV irradiation, promoting nucleotide excision repair. Mediates ubiquitination and degradation of sumoylated PML. The regulation of the BMP-SMAD signaling is however independent of sumoylation and is not dependent of SUMO interaction motifs (SIMs). This chain is E3 ubiquitin-protein ligase Arkadia (RNF111), found in Pongo abelii (Sumatran orangutan).